Reading from the N-terminus, the 385-residue chain is G2/mitotic-specific cyclin-B3 (385 aa).

Residues 1 to 16 (MMLRSQAKNVDLTSQA) show a composition bias toward polar residues. Disordered stretches follow at residues 1 to 48 (MMLR…HSKG) and 63 to 88 (SAKR…QKSR). Basic and acidic residues-rich tracts occupy residues 17 to 28 (DSRHQQKRKQAE) and 63 to 80 (SAKR…RDVE).

It belongs to the cyclin family. Cyclin AB subfamily.

The protein localises to the nucleus. Its function is as follows. Could be involved at the G2/M (mitosis) transition. Interacts with the CDK1 and CDK2 protein kinases. G2/M cyclins accumulate steadily during G2 and are abruptly destroyed at mitosis. Plays a role during oocyte meiosis II. In Caenorhabditis elegans, this protein is G2/mitotic-specific cyclin-B3 (cyb-3).